A 209-amino-acid polypeptide reads, in one-letter code: Small ribosomal subunit protein uS4 (209 aa).

The S4 RNA-binding domain occupies S98–K158.

This sequence belongs to the universal ribosomal protein uS4 family. In terms of assembly, part of the 30S ribosomal subunit. Contacts protein S5. The interaction surface between S4 and S5 is involved in control of translational fidelity.

One of the primary rRNA binding proteins, it binds directly to 16S rRNA where it nucleates assembly of the body of the 30S subunit. In terms of biological role, with S5 and S12 plays an important role in translational accuracy. The chain is Small ribosomal subunit protein uS4 from Pseudothermotoga lettingae (strain ATCC BAA-301 / DSM 14385 / NBRC 107922 / TMO) (Thermotoga lettingae).